A 425-amino-acid chain; its full sequence is MLDIKRLRKDFAGIREKLQTRGEDISGLEKFGSLDEKRRQVIVKVEELKSRRNQVSQEVAQLKREKKDADHLIKEMRDVSDEIKGLDETLRQLDEELDQLLLAIPNVPHESTPVGETEDDNVEVRKWGEVPNFPFEPKAHWDLATALGIVDFERAAKVTGSRFAFYKGAGARLERALINFMMDLHHDKHGYEEVLPPYLVNRTSMTGTGQLPKFEEDAFKIREEDYFLIPTAEVPVTNLHRDEILSADQLPIAYTAYSMNFRSEAGSAGRDTRGLIRQHQFNKVELVRFVAPEDSYDELEKLTGHAEKVLQLLKLPYRVMSMCTADLGFTAAKKYDLEVWIPSANTYREISSCSNFEDFQARRANIKFRREAKGKAEFVHTLNGSGLAVGRTVAAILENYQQEDGTIVIPEVLRPYMGGMEKFEA.

231–233 (TAE) serves as a coordination point for L-serine. 262 to 264 (RSE) lines the ATP pocket. Glu285 is an L-serine binding site. 349 to 352 (EISS) is an ATP binding site. Ser385 contacts L-serine.

Belongs to the class-II aminoacyl-tRNA synthetase family. Type-1 seryl-tRNA synthetase subfamily. In terms of assembly, homodimer. The tRNA molecule binds across the dimer.

Its subcellular location is the cytoplasm. It carries out the reaction tRNA(Ser) + L-serine + ATP = L-seryl-tRNA(Ser) + AMP + diphosphate + H(+). The catalysed reaction is tRNA(Sec) + L-serine + ATP = L-seryl-tRNA(Sec) + AMP + diphosphate + H(+). It functions in the pathway aminoacyl-tRNA biosynthesis; selenocysteinyl-tRNA(Sec) biosynthesis; L-seryl-tRNA(Sec) from L-serine and tRNA(Sec): step 1/1. Catalyzes the attachment of serine to tRNA(Ser). Is also able to aminoacylate tRNA(Sec) with serine, to form the misacylated tRNA L-seryl-tRNA(Sec), which will be further converted into selenocysteinyl-tRNA(Sec). This is Serine--tRNA ligase from Halalkalibacterium halodurans (strain ATCC BAA-125 / DSM 18197 / FERM 7344 / JCM 9153 / C-125) (Bacillus halodurans).